We begin with the raw amino-acid sequence, 447 residues long: Argininosuccinate synthase (447 aa).

Residues 17 to 25 (AFSGGLDTS) and alanine 43 each bind ATP. Residue tyrosine 99 participates in L-citrulline binding. Residues glycine 129 and threonine 131 each coordinate ATP. L-aspartate-binding residues include threonine 131, asparagine 135, and aspartate 136. L-citrulline is bound at residue asparagine 135. Residue aspartate 136 participates in ATP binding. Residues arginine 139 and serine 192 each contribute to the L-citrulline site. Aspartate 194 lines the ATP pocket. Threonine 201, glutamate 203, and glutamate 280 together coordinate L-citrulline.

This sequence belongs to the argininosuccinate synthase family. Type 2 subfamily. In terms of assembly, homotetramer.

The protein localises to the cytoplasm. It catalyses the reaction L-citrulline + L-aspartate + ATP = 2-(N(omega)-L-arginino)succinate + AMP + diphosphate + H(+). It functions in the pathway amino-acid biosynthesis; L-arginine biosynthesis; L-arginine from L-ornithine and carbamoyl phosphate: step 2/3. This chain is Argininosuccinate synthase, found in Escherichia coli O127:H6 (strain E2348/69 / EPEC).